The following is a 390-amino-acid chain: L-rhamnonate dehydratase (390 aa).

Residues His19 and Arg45 each contribute to the substrate site. 3 residues coordinate Mg(2+): Asp211, Glu237, and Glu265. Catalysis depends on His315, which acts as the Proton acceptor. Glu335 is a binding site for substrate.

This sequence belongs to the mandelate racemase/muconate lactonizing enzyme family. RhamD subfamily. Requires Mg(2+) as cofactor.

The enzyme catalyses L-rhamnonate = 2-dehydro-3-deoxy-L-rhamnonate + H2O. In terms of biological role, catalyzes the dehydration of L-rhamnonate to 2-keto-3-deoxy-L-rhamnonate (KDR). This Saccharopolyspora erythraea (strain ATCC 11635 / DSM 40517 / JCM 4748 / NBRC 13426 / NCIMB 8594 / NRRL 2338) protein is L-rhamnonate dehydratase.